Reading from the N-terminus, the 185-residue chain is Ribosome-recycling factor (185 aa).

The protein belongs to the RRF family.

The protein localises to the cytoplasm. In terms of biological role, responsible for the release of ribosomes from messenger RNA at the termination of protein biosynthesis. May increase the efficiency of translation by recycling ribosomes from one round of translation to another. This chain is Ribosome-recycling factor, found in Corynebacterium kroppenstedtii (strain DSM 44385 / JCM 11950 / CIP 105744 / CCUG 35717).